The chain runs to 257 residues: MGRVIRGQRKGAGSVFRAHVKHRKGAARLRAVDFAERHGYIKGIVKDIIHDPGRGAPLAKVVFRDPYRFKKRTELFIAAEGIHTGQFVYCGKKAQLNIGNVLPVGTMPEGTIVCCLEEKPGDRGKLARASGNYATVISHNPETKKTRVKLPSGSKKVISSANRAVVGVVAGGGRIDKPILKAGRAYHKYKAKRNCWPRVRGVAMNPVEHPFGGGNHQHIGKPSTIRRDAPAGRKVGLIAARRTGRLRGTKTVQEKEN.

Glycyl lysine isopeptide (Lys-Gly) (interchain with G-Cter in SUMO2) cross-links involve residues Lys42 and Lys149. Residues 207–232 (VEHPFGGGNHQHIGKPSTIRRDAPAG) are disordered. His216 bears the (3S)-3-hydroxyhistidine mark. Glycyl lysine isopeptide (Lys-Gly) (interchain with G-Cter in SUMO2) cross-links involve residues Lys234 and Lys250.

Belongs to the universal ribosomal protein uL2 family. Component of the large ribosomal subunit. Interacts with CRY1. Post-translationally, hydroxylated on His-216 by RIOX1. The modification is impaired by hypoxia.

Its subcellular location is the cytoplasm. Component of the large ribosomal subunit. The ribosome is a large ribonucleoprotein complex responsible for the synthesis of proteins in the cell. In Bos taurus (Bovine), this protein is Large ribosomal subunit protein uL2 (RPL8).